Here is a 453-residue protein sequence, read N- to C-terminus: Carbamoyl phosphate synthase arginine-specific small chain (453 aa).

The N-terminal 13 residues, 1–13 (MFSKLAANFAQRA), are a transit peptide targeting the mitochondrion. A Glutamine amidotransferase type-1 domain is found at 233–420 (HVALIDCGVK…LENVRAAKSA (188 aa)). Residue Cys309 is the Nucleophile of the active site. Active-site residues include His393 and Glu395.

The protein belongs to the CarA family. Heterodimer composed of 2 chains; the small (or glutamine) chain promotes the hydrolysis of glutamine to ammonia, which is used by the large (or ammonia) chain to synthesize carbamoyl phosphate.

It is found in the mitochondrion matrix. The catalysed reaction is hydrogencarbonate + L-glutamine + 2 ATP + H2O = carbamoyl phosphate + L-glutamate + 2 ADP + phosphate + 2 H(+). It catalyses the reaction L-glutamine + H2O = L-glutamate + NH4(+). It functions in the pathway amino-acid biosynthesis; L-arginine biosynthesis; carbamoyl phosphate from bicarbonate: step 1/1. Functionally, small subunit of the arginine-specific carbamoyl phosphate synthase (CPSase). CPSase catalyzes the formation of carbamoyl phosphate from the ammonia moiety of glutamine, carbonate, and phosphate donated by ATP, the first step of the arginine biosynthetic pathway. The small subunit (glutamine amidotransferase) binds and cleaves glutamine to supply the large subunit with the substrate ammonia. The chain is Carbamoyl phosphate synthase arginine-specific small chain (cpa1) from Hypocrea virens (Gliocladium virens).